A 117-amino-acid chain; its full sequence is Probable non-functional T cell receptor gamma variable (117 aa).

The signal sequence occupies residues 1-20 (MRWALAVLLAFLSPASQISS). One can recognise an Ig-like domain in the interval 21–117 (NLEGRTKSVT…GFYYCATWDR (97 aa)). A disulfide bridge links Cys41 with Cys112. Asn105 is a glycosylation site (N-linked (GlcNAc...) asparagine).

In terms of assembly, gamma-delta TR is a heterodimer composed of a gamma and delta chain; disulfide-linked. The gamma-delta TR is associated with the transmembrane signaling CD3 coreceptor proteins following the stoichiometry: a single gamma-delta TR heterodimer associates with one CD3D-CD3E heterodimer, one CD3G-CD3E heterodimer and one CD247 homodimer forming a stable octameric structure. Upon activation, gamma-delta TR complex associates with FCER1G to initiate intracellular signaling.

It localises to the cell membrane. Probable non-functional open reading frame (ORF) of V region of the variable domain of T cell receptor (TR) gamma chain. Non-functional ORF generally cannot participate in the synthesis of a productive T cell receptor (TR) chain due to altered V-(D)-J or switch recombination and/or splicing site (at mRNA level) and/or conserved amino acid change (protein level). Gamma-delta TRs recognize a variety of self and foreign non-peptide antigens frequently expressed at the epithelial boundaries between the host and external environment, including endogenous lipids presented by MH-like protein CD1D and phosphoantigens presented by butyrophilin-like molecule BTN3A1. Upon antigen recognition induces rapid, innate-like immune responses involved in pathogen clearance and tissue repair. Binding of gamma-delta TR complex to antigen triggers phosphorylation of immunoreceptor tyrosine-based activation motifs (ITAMs) in the CD3 chains by the LCK and FYN kinases, allowing the recruitment, phosphorylation, and activation of ZAP70 that facilitates phosphorylation of the scaffolding proteins LCP2 and LAT. This lead to the formation of a supramolecular signalosome that recruits the phospholipase PLCG1, resulting in calcium mobilization and ERK activation, ultimately leading to T cell expansion and differentiation into effector cells. Gamma-delta TRs are produced through somatic rearrangement of a limited repertoire of variable (V), diversity (D), and joining (J) genes. The potential diversity of gamma-delta TRs is conferred by the unique ability to rearrange (D) genes in tandem and to utilize all three reading frames. The combinatorial diversity is considerably increased by the sequence exonuclease trimming and random nucleotide (N) region additions which occur during the V-(D)-J rearrangements. This is Probable non-functional T cell receptor gamma variable from Homo sapiens (Human).